A 364-amino-acid chain; its full sequence is Ribosomal RNA large subunit methyltransferase M (364 aa).

S-adenosyl-L-methionine contacts are provided by residues Ser-187, 220–223 (CPGG), Asp-239, Asp-259, and Asp-276. Residue Lys-305 is the Proton acceptor of the active site.

The protein belongs to the class I-like SAM-binding methyltransferase superfamily. RNA methyltransferase RlmE family. RlmM subfamily. Monomer.

It is found in the cytoplasm. The enzyme catalyses cytidine(2498) in 23S rRNA + S-adenosyl-L-methionine = 2'-O-methylcytidine(2498) in 23S rRNA + S-adenosyl-L-homocysteine + H(+). Catalyzes the 2'-O-methylation at nucleotide C2498 in 23S rRNA. This chain is Ribosomal RNA large subunit methyltransferase M, found in Aeromonas hydrophila subsp. hydrophila (strain ATCC 7966 / DSM 30187 / BCRC 13018 / CCUG 14551 / JCM 1027 / KCTC 2358 / NCIMB 9240 / NCTC 8049).